The primary structure comprises 100 residues: Large ribosomal subunit protein uL23 (100 aa).

The protein belongs to the universal ribosomal protein uL23 family. As to quaternary structure, part of the 50S ribosomal subunit. Contacts protein L29, and trigger factor when it is bound to the ribosome.

One of the early assembly proteins it binds 23S rRNA. One of the proteins that surrounds the polypeptide exit tunnel on the outside of the ribosome. Forms the main docking site for trigger factor binding to the ribosome. This is Large ribosomal subunit protein uL23 from Colwellia psychrerythraea (strain 34H / ATCC BAA-681) (Vibrio psychroerythus).